A 244-amino-acid polypeptide reads, in one-letter code: MSFTVYPALDIRDGRVVRLLQGDYARETRYGDDVLPRAQAFADAGAQWMHLVDLDAAKAGGYTLAALLGQISRQTGLQVQTGGGVRSREDVARILDAGAARVVVGSLAVRDSATVIGWLQEFGTDRLTIALDTRQDAAGVWQLPVHGWTETAEATLDQLATQYAQAGLQHLLCTDIARDGMLSGPNMGLYAHLRALAPQLQVQVSGGARNLADVAAAKAAGCAGIVLGKALLEGHLDLKDALAC.

The active-site Proton acceptor is the Asp-10. Asp-132 functions as the Proton donor in the catalytic mechanism.

The protein belongs to the HisA/HisF family.

It is found in the cytoplasm. The catalysed reaction is 1-(5-phospho-beta-D-ribosyl)-5-[(5-phospho-beta-D-ribosylamino)methylideneamino]imidazole-4-carboxamide = 5-[(5-phospho-1-deoxy-D-ribulos-1-ylimino)methylamino]-1-(5-phospho-beta-D-ribosyl)imidazole-4-carboxamide. It participates in amino-acid biosynthesis; L-histidine biosynthesis; L-histidine from 5-phospho-alpha-D-ribose 1-diphosphate: step 4/9. The polypeptide is 1-(5-phosphoribosyl)-5-[(5-phosphoribosylamino)methylideneamino] imidazole-4-carboxamide isomerase (Xanthomonas campestris pv. campestris (strain 8004)).